Consider the following 352-residue polypeptide: C-C chemokine receptor type 5 (352 aa).

The Extracellular segment spans residues 1 to 30 (MDYQVSSPIYDIDYYTSEPCQKINVKQIAA). The residue at position 3 (Tyr-3) is a Sulfotyrosine. O-linked (GalNAc...) serine glycosylation is found at Ser-6 and Ser-7. Tyr-10, Tyr-14, and Tyr-15 each carry sulfotyrosine. Disulfide bonds link Cys-20–Cys-269 and Cys-101–Cys-178. Residues 31–58 (RLLPPLYSLVFIFGFVGNMLVILILINC) traverse the membrane as a helical segment. Residues 59–68 (KRLKSMTDIY) are Cytoplasmic-facing. A helical transmembrane segment spans residues 69-89 (LLNLAISDLFFLLTVPFWAHY). The Extracellular portion of the chain corresponds to 90–102 (AAAQWDFGNTMCQ). A helical transmembrane segment spans residues 103–124 (LLTGLYFIGFFSGIFFIILLTI). Over 125–141 (DRYLAIVHAVFALKART) the chain is Cytoplasmic. The helical transmembrane segment at 142-166 (VTFGVVTSVITWVVAVFASLPGIIF) threads the bilayer. The Extracellular segment spans residues 167-198 (TRSQKEGLHYTCSSHFPYSQYQFWKNFQTLKI). A helical transmembrane segment spans residues 199 to 218 (VILGLVLPLLVMVICYSGIL). The Cytoplasmic portion of the chain corresponds to 219–235 (KTLLRCRNEKKRHRAVR). Residues 236 to 260 (LIFTIMIVYFLFWAPYNIVLLLNTF) form a helical membrane-spanning segment. Residues 261–277 (QEFFGLNNCSSSNRLDQ) are Extracellular-facing. A helical transmembrane segment spans residues 278 to 301 (AMQVTETLGMTHCCINPIIYAFVG). Over 302–352 (EKFRNYLLVFFQKHIAKRFCKCCSIFQQEAPERASSVYTRSTGEQEISVGL) the chain is Cytoplasmic. S-palmitoyl cysteine attachment occurs at residues Cys-321, Cys-323, and Cys-324. Phosphoserine; by BARK1 is present on residues Ser-336, Ser-337, Ser-342, and Ser-349.

This sequence belongs to the G-protein coupled receptor 1 family. Interacts with PRAF2. Efficient ligand binding to CCL3/MIP-1alpha and CCL4/MIP-1beta requires sulfation, O-glycosylation and sialic acid modifications. Glycosylation on Ser-6 is required for efficient binding of CCL4. Interacts with GRK2. Interacts with ARRB1 and ARRB2. Interacts with CNIH4. Interacts with S100A4; this interaction stimulates T-lymphocyte chemotaxis. Post-translationally, sulfated on at least 2 of the N-terminal tyrosines. Sulfation is required for efficient binding of the chemokines, CCL3 and CCL4. Palmitoylation in the C-terminal is important for cell surface expression. In terms of processing, phosphorylation on serine residues in the C-terminal is stimulated by binding CC chemokines especially by APO-RANTES. Post-translationally, O-glycosylated, but not N-glycosylated. Ser-6 appears to be the major site even if Ser-7 may be also O-glycosylated. Also sialylated glycans present which contribute to chemokine binding. Thr-16 and Ser-17 may also be glycosylated and, if so, with small moieties such as a T-antigen.

The protein localises to the cell membrane. In terms of biological role, receptor for a number of inflammatory CC-chemokines including CCL3/MIP-1-alpha, CCL4/MIP-1-beta and RANTES and subsequently transduces a signal by increasing the intracellular calcium ion level. May play a role in the control of granulocytic lineage proliferation or differentiation. Participates in T-lymphocyte migration to the infection site by acting as a chemotactic receptor. The protein is C-C chemokine receptor type 5 (CCR5) of Pan paniscus (Pygmy chimpanzee).